We begin with the raw amino-acid sequence, 273 residues long: NAD-dependent protein deacylase (273 aa).

Positions 1–269 (MNLDNAIHEA…PRIVEQVKKI (269 aa)) constitute a Deacetylase sirtuin-type domain. NAD(+) contacts are provided by residues 25–44 (GAGV…GGVW) and 107–110 (QNID). The Proton acceptor role is filled by H125. Zn(2+) is bound by residues C133, C136, C173, and C176. NAD(+) contacts are provided by residues 211-213 (GTS), 237-239 (NPN), and T255.

This sequence belongs to the sirtuin family. Class III subfamily. Requires Zn(2+) as cofactor.

It localises to the cytoplasm. The enzyme catalyses N(6)-acetyl-L-lysyl-[protein] + NAD(+) + H2O = 2''-O-acetyl-ADP-D-ribose + nicotinamide + L-lysyl-[protein]. NAD-dependent protein deacetylase which modulates the activities of several proteins which are inactive in their acetylated form. This Desulfosudis oleivorans (strain DSM 6200 / JCM 39069 / Hxd3) (Desulfococcus oleovorans) protein is NAD-dependent protein deacylase (cobB).